The primary structure comprises 177 residues: Protein C (177 aa).

Over residues Met1–Arg10 the composition is skewed to polar residues. The interval Met1–Arg37 is disordered.

Belongs to the morbillivirus protein C family.

The protein is Protein C (P/V/C) of Bos indicus (Zebu).